Here is a 320-residue protein sequence, read N- to C-terminus: Glutathione synthetase (320 aa).

Residues 130–315 (KIFISWFSRF…ITGILIDYIE (186 aa)) enclose the ATP-grasp domain. 156–212 (WKEKNDIILKPLDAMGGKGVFRIKKDDPNFSVIVETLTNYEKKYCMIQTYLPEVQFG) lines the ATP pocket. Mg(2+) contacts are provided by glutamate 286 and asparagine 288.

Belongs to the prokaryotic GSH synthase family. Mg(2+) serves as cofactor. The cofactor is Mn(2+).

It carries out the reaction gamma-L-glutamyl-L-cysteine + glycine + ATP = glutathione + ADP + phosphate + H(+). It functions in the pathway sulfur metabolism; glutathione biosynthesis; glutathione from L-cysteine and L-glutamate: step 2/2. This Buchnera aphidicola subsp. Schizaphis graminum (strain Sg) protein is Glutathione synthetase.